The sequence spans 926 residues: Transcriptional activator protein acu-15 (926 aa).

Residues 24 to 51 (CDRCRSKKIRCDGIRPCCSQCANVGFEC) constitute a DNA-binding region (zn(2)-C6 fungal-type). Disordered regions lie at residues 100 to 129 (KMHS…TPAK), 602 to 649 (LPQS…SASL), and 667 to 801 (TPQH…TSTG). Over residues 119–129 (EIKRDSGTPAK) the composition is skewed to basic and acidic residues. Low complexity-rich tracts occupy residues 623 to 632 (AQQGSPSPSA) and 669 to 681 (QHQQ…LQQQ). Polar residues-rich tracts occupy residues 689–703 (ARSQ…QKAQ) and 726–736 (RTSTGTQSTPN). Low complexity predominate over residues 740 to 792 (LSLSSPQSPVSPVQMRSQPHQLQQQQQQQPQPQQQQQQHQRSSIASSHSQQGQ).

The protein localises to the nucleus. Positive regulator of acetate induction. In Neurospora crassa (strain ATCC 24698 / 74-OR23-1A / CBS 708.71 / DSM 1257 / FGSC 987), this protein is Transcriptional activator protein acu-15 (acu-15).